A 21-amino-acid polypeptide reads, in one-letter code: GVYMEIGRCRXEAXRRRKEAV.

It catalyses the reaction ATP = 3',5'-cyclic AMP + diphosphate. The chain is Putative sperm adenylate cyclase from Mus musculus (Mouse).